Here is a 336-residue protein sequence, read N- to C-terminus: UDP-N-acetylglucosamine--N-acetylmuramyl-(pentapeptide) pyrophosphoryl-undecaprenol N-acetylglucosamine transferase (336 aa).

UDP-N-acetyl-alpha-D-glucosamine is bound by residues 10–12 (TGG), Asn124, Arg157, Ser179, and Gln277.

This sequence belongs to the glycosyltransferase 28 family. MurG subfamily.

The protein resides in the cell inner membrane. The catalysed reaction is di-trans,octa-cis-undecaprenyl diphospho-N-acetyl-alpha-D-muramoyl-L-alanyl-D-glutamyl-meso-2,6-diaminopimeloyl-D-alanyl-D-alanine + UDP-N-acetyl-alpha-D-glucosamine = di-trans,octa-cis-undecaprenyl diphospho-[N-acetyl-alpha-D-glucosaminyl-(1-&gt;4)]-N-acetyl-alpha-D-muramoyl-L-alanyl-D-glutamyl-meso-2,6-diaminopimeloyl-D-alanyl-D-alanine + UDP + H(+). It functions in the pathway cell wall biogenesis; peptidoglycan biosynthesis. In terms of biological role, cell wall formation. Catalyzes the transfer of a GlcNAc subunit on undecaprenyl-pyrophosphoryl-MurNAc-pentapeptide (lipid intermediate I) to form undecaprenyl-pyrophosphoryl-MurNAc-(pentapeptide)GlcNAc (lipid intermediate II). The sequence is that of UDP-N-acetylglucosamine--N-acetylmuramyl-(pentapeptide) pyrophosphoryl-undecaprenol N-acetylglucosamine transferase from Wolinella succinogenes (strain ATCC 29543 / DSM 1740 / CCUG 13145 / JCM 31913 / LMG 7466 / NCTC 11488 / FDC 602W) (Vibrio succinogenes).